Reading from the N-terminus, the 739-residue chain is UPF0313 protein YgiQ (739 aa).

Positions 372 to 650 (AYEMIRFSVN…KALLRYHDPA (279 aa)) constitute a Radical SAM core domain. [4Fe-4S] cluster contacts are provided by Cys386, Cys390, and Cys393. The disordered stretch occupies residues 685-739 (REARRQNRNTRPALTKHTPMATQRQTPATAKKASSTQSRPVNAGAKKRPKAAVGR). Polar residues predominate over residues 704–724 (MATQRQTPATAKKASSTQSRP). Residues 729–739 (AKKRPKAAVGR) are compositionally biased toward basic residues.

This sequence belongs to the UPF0313 family. [4Fe-4S] cluster is required as a cofactor.

This chain is UPF0313 protein YgiQ (ygiQ), found in Escherichia coli (strain K12).